The primary structure comprises 367 residues: 3-dehydroquinate synthase (367 aa).

NAD(+) is bound by residues 72-77, 106-110, 130-131, Lys-143, Lys-152, and 170-173; these read DGENYK, GVIGD, TT, and FLST. Positions 185, 248, and 265 each coordinate Zn(2+).

The protein belongs to the sugar phosphate cyclases superfamily. Dehydroquinate synthase family. Co(2+) serves as cofactor. The cofactor is Zn(2+). It depends on NAD(+) as a cofactor.

It is found in the cytoplasm. It catalyses the reaction 7-phospho-2-dehydro-3-deoxy-D-arabino-heptonate = 3-dehydroquinate + phosphate. Its pathway is metabolic intermediate biosynthesis; chorismate biosynthesis; chorismate from D-erythrose 4-phosphate and phosphoenolpyruvate: step 2/7. Catalyzes the conversion of 3-deoxy-D-arabino-heptulosonate 7-phosphate (DAHP) to dehydroquinate (DHQ). In Buchnera aphidicola subsp. Cinara cedri (strain Cc), this protein is 3-dehydroquinate synthase.